The primary structure comprises 63 residues: MKASELREKTAEQLNEQLLGLLRDQFNLRMQKATGQLGQTHLLSQVKRDIARVKTVLNQQAGK.

This sequence belongs to the universal ribosomal protein uL29 family.

The sequence is that of Large ribosomal subunit protein uL29 from Azotobacter vinelandii (strain DJ / ATCC BAA-1303).